The primary structure comprises 759 residues: Forkhead box protein M1 (759 aa).

Disordered stretches follow at residues 1–54 and 94–165; these read MRTS…AESS and KGKE…QRQE. A compositionally biased stretch (polar residues) spans 36–54; the sequence is PGQQEPTQAQASQDVAESS. The segment covering 141–151 has biased composition (low complexity); the sequence is LGPKPGAKGVP. Glycyl lysine isopeptide (Lys-Gly) (interchain with G-Cter in SUMO2) cross-links involve residues Lys200 and Lys324. The fork-head DNA-binding region spans 234 to 326; it reads ERPPYSYMAM…LTLDQVFKPL (93 aa). Residues 328–349 are disordered; the sequence is PGSPQSPEHLESQQKRPNPELR. Phosphoserine is present on Ser330. Over residues 335–349 the composition is skewed to basic and acidic residues; the sequence is EHLESQQKRPNPELR. Residue Lys355 forms a Glycyl lysine isopeptide (Lys-Gly) (interchain with G-Cter in SUMO2) linkage. A Phosphoserine; by CHEK2 modification is found at Ser375. Glycyl lysine isopeptide (Lys-Gly) (interchain with G-Cter in SUMO2) cross-links involve residues Lys421 and Lys439. The residue at position 521 (Ser521) is a Phosphoserine. 3 disordered regions span residues 530-556, 572-643, and 681-706; these read LVTK…CLDE, MEIL…PQGA, and LASD…LQVP. Basic and acidic residues predominate over residues 531–542; it reads VTKRREKREVSR. The segment covering 604-613 has biased composition (polar residues); sequence PVSSTPSKSV. Thr608 carries the post-translational modification Phosphothreonine; by CDK1. Thr624 bears the Phosphothreonine mark. Phosphoserine; by PLK1 is present on residues Ser726 and Ser735.

Phosphorylated in M (mitotic) phase. Phosphorylation by the checkpoint kinase CHEK2 in response to DNA damage increases the FOXM1 protein stability probably stimulating the transcription of genes involved in DNA repair. Phosphorylated by CDK1 in late S and G2 phases, creating docking sites for the POLO box domains of PLK1. Subsequently, PLK1 binds and phosphorylates FOXM1, leading to activation of transcriptional activity and subsequent enhanced expression of key mitotic regulators. Phosphorylated by GSK3B leading to ubiquitination and proteasomal degradation. In terms of tissue distribution, highly expressed in thymus and testis, but weakly in intestine and lung. Appears to be expressed only in adult organs containing proliferating/cycling cells or in response to growth factors.

The protein resides in the nucleus. Transcription factor regulating the expression of cell cycle genes essential for DNA replication and mitosis. Plays a role in the control of cell proliferation. Also plays a role in DNA break repair, participating in the DNA damage checkpoint response. Promotes transcription of PHB2. This Rattus norvegicus (Rat) protein is Forkhead box protein M1 (Foxm1).